We begin with the raw amino-acid sequence, 337 residues long: Mannan polymerase complex subunit mnn9 (337 aa).

Topologically, residues 1 to 8 (MRVYNKSR) are cytoplasmic. A helical; Signal-anchor for type II membrane protein transmembrane segment spans residues 9–29 (IVGQLLFVALGITFIYYLFTP). At 30–337 (SVNSNAKVQI…PYYLVFHHNE (308 aa)) the chain is on the lumenal side.

This sequence belongs to the ANP1/MMN9/VAN1 family.

It is found in the endoplasmic reticulum membrane. The protein localises to the golgi apparatus membrane. It functions in the pathway protein modification; protein glycosylation. Required for the addition of the long alpha 1,6-mannose backbone of N-linked glycans on cell wall and periplasmic proteins. In Schizosaccharomyces pombe (strain 972 / ATCC 24843) (Fission yeast), this protein is Mannan polymerase complex subunit mnn9.